The chain runs to 158 residues: Small ribosomal subunit protein eS10 (158 aa).

Positions 99 to 158 are disordered; it reads ETVRRGAVGRPDAPARSAEDRSAYRRAPTTPAAHDKKADVGPGSADLEFRGGFGRGRPAP. The segment covering 149–158 has biased composition (gly residues); that stretch reads GGFGRGRPAP.

It belongs to the eukaryotic ribosomal protein eS10 family.

The protein resides in the cytoplasm. The polypeptide is Small ribosomal subunit protein eS10 (RpS10) (Spodoptera frugiperda (Fall armyworm)).